A 280-amino-acid chain; its full sequence is Eukaryotic translation initiation factor 3 subunit F-1 (280 aa).

Positions 8-138 (VRVHPVVLFQ…LRAYVCIQLG (131 aa)) constitute an MPN domain.

This sequence belongs to the eIF-3 subunit F family. Component of the eukaryotic translation initiation factor 3 (eIF-3) complex. The eIF-3 complex interacts with pix.

Its subcellular location is the cytoplasm. Component of the eukaryotic translation initiation factor 3 (eIF-3) complex, which is involved in protein synthesis of a specialized repertoire of mRNAs and, together with other initiation factors, stimulates binding of mRNA and methionyl-tRNAi to the 40S ribosome. The eIF-3 complex specifically targets and initiates translation of a subset of mRNAs involved in cell proliferation. This chain is Eukaryotic translation initiation factor 3 subunit F-1, found in Drosophila willistoni (Fruit fly).